Reading from the N-terminus, the 154-residue chain is 6,7-dimethyl-8-ribityllumazine synthase (154 aa).

Residues F15, 47-49 (TFD), and 71-73 (AVI) each bind 5-amino-6-(D-ribitylamino)uracil. 76–77 (ET) serves as a coordination point for (2S)-2-hydroxy-3-oxobutyl phosphate. The active-site Proton donor is the H79. L104 serves as a coordination point for 5-amino-6-(D-ribitylamino)uracil. (2S)-2-hydroxy-3-oxobutyl phosphate is bound at residue R119.

This sequence belongs to the DMRL synthase family.

It carries out the reaction (2S)-2-hydroxy-3-oxobutyl phosphate + 5-amino-6-(D-ribitylamino)uracil = 6,7-dimethyl-8-(1-D-ribityl)lumazine + phosphate + 2 H2O + H(+). It functions in the pathway cofactor biosynthesis; riboflavin biosynthesis; riboflavin from 2-hydroxy-3-oxobutyl phosphate and 5-amino-6-(D-ribitylamino)uracil: step 1/2. In terms of biological role, catalyzes the formation of 6,7-dimethyl-8-ribityllumazine by condensation of 5-amino-6-(D-ribitylamino)uracil with 3,4-dihydroxy-2-butanone 4-phosphate. This is the penultimate step in the biosynthesis of riboflavin. This Saccharolobus islandicus (strain L.S.2.15 / Lassen #1) (Sulfolobus islandicus) protein is 6,7-dimethyl-8-ribityllumazine synthase.